Reading from the N-terminus, the 86-residue chain is MANTKSAIKAARKSLRLHDRNQGVKTRLKTLHKKLETAVKSGDAASSKAAAVAYTSAVDKAVKSGVVHRNVAARAKSHVAKIVFAK.

The interval 1-21 (MANTKSAIKAARKSLRLHDRN) is disordered.

It belongs to the bacterial ribosomal protein bS20 family.

Its function is as follows. Binds directly to 16S ribosomal RNA. In Opitutus terrae (strain DSM 11246 / JCM 15787 / PB90-1), this protein is Small ribosomal subunit protein bS20.